We begin with the raw amino-acid sequence, 571 residues long: Proline--tRNA ligase (571 aa).

Belongs to the class-II aminoacyl-tRNA synthetase family. ProS type 1 subfamily. As to quaternary structure, homodimer.

It is found in the cytoplasm. It catalyses the reaction tRNA(Pro) + L-proline + ATP = L-prolyl-tRNA(Pro) + AMP + diphosphate. Catalyzes the attachment of proline to tRNA(Pro) in a two-step reaction: proline is first activated by ATP to form Pro-AMP and then transferred to the acceptor end of tRNA(Pro). As ProRS can inadvertently accommodate and process non-cognate amino acids such as alanine and cysteine, to avoid such errors it has two additional distinct editing activities against alanine. One activity is designated as 'pretransfer' editing and involves the tRNA(Pro)-independent hydrolysis of activated Ala-AMP. The other activity is designated 'posttransfer' editing and involves deacylation of mischarged Ala-tRNA(Pro). The misacylated Cys-tRNA(Pro) is not edited by ProRS. The polypeptide is Proline--tRNA ligase (Photobacterium profundum (strain SS9)).